The following is a 115-amino-acid chain: uncharacterized protein (115 aa).

3 consecutive transmembrane segments (helical) span residues Ile-10 to Leu-30, Ala-47 to Ala-67, and Val-77 to Val-97.

It localises to the cell membrane. This is an uncharacterized protein from Mycoplasma genitalium (strain ATCC 33530 / DSM 19775 / NCTC 10195 / G37) (Mycoplasmoides genitalium).